Consider the following 121-residue polypeptide: Non-structural protein 8 (121 aa).

Positions 1–15 (MKLLIVFGLLTSVYC) are cleaved as a signal peptide. Positions 19-121 (ECSIQECCEN…HDVRVVLDFV (103 aa)) constitute an SARS ORF8 Ig-like domain. 3 cysteine pairs are disulfide-bonded: Cys25/Cys90, Cys37/Cys102, and Cys61/Cys83.

This is Non-structural protein 8 from Bat coronavirus Rp3/2004 (BtCoV/Rp3/2004).